Here is a 139-residue protein sequence, read N- to C-terminus: Desampylase (139 aa).

Residues 6–139 enclose the MPN domain; it reads LSLAADARDS…EFRELSVAVE (134 aa). The Proton donor/acceptor role is filled by glutamate 31. Positions 88, 90, and 101 each coordinate Zn(2+). A JAMM motif motif is present at residues 88 to 101; it reads HSHPESDPVPSATD.

Belongs to the peptidase M67B family. Monomer. Zn(2+) serves as cofactor.

The enzyme catalyses an N(6)-[small archaeal modifier protein]-[protein]-L-lysine + H2O = a [protein]-L-lysine + a [small archaeal modifier protein].. Its activity is regulated as follows. Inhibited by EDTA and N-ethylmaleimide (NEM) in vitro. Its function is as follows. Metalloprotease that displays desampylase (DSAMP) activity, cleaving ubiquitin-like small archaeal modifier proteins (SAMP1, SAMP2 and SAMP3) from protein conjugates (isopeptide- and linear-linked). Thus, likely regulates sampylation and the pools of 'free' SAMP available for protein modification. Functions as a specific and not a general protease since it is unable to hydrolyze a variety of unmodified proteins otherwise hydrolyzed by proteinase K. The polypeptide is Desampylase (Haloferax volcanii (strain ATCC 29605 / DSM 3757 / JCM 8879 / NBRC 14742 / NCIMB 2012 / VKM B-1768 / DS2) (Halobacterium volcanii)).